The primary structure comprises 90 residues: UPF0298 protein SSU98_1559 (90 aa).

The protein belongs to the UPF0298 family.

The protein localises to the cytoplasm. This chain is UPF0298 protein SSU98_1559, found in Streptococcus suis (strain 98HAH33).